Reading from the N-terminus, the 306-residue chain is MDFISIEQLVSGERVDRKALEFGRGVPDPGGWPSGWTLGPQEAVAREKLKLEEEKRKKLERFNSSRLTLDNLTDLENLVQRRRKKRQRHKVPPREPESGAEPQPQVPLEPVGLEMFLKAAAENQEALIDKYLADGGDPNAHDKLHRTALHWACLKGHRQLVNKLLAAGAAIEVRDLLDRTPVFWACRGGHLDILKRLLNQGAQVNAQDKIWSTPLHVAVRMGHSDCLEHLIECGAHINAQDKEGDTALHEAVRYGHHKATKLLLLYGAKLGVKNVASQTPVQLARDWQRGIRDALQAHVGHPRTRC.

Residues 41–90 (QEAVAREKLKLEEEKRKKLERFNSSRLTLDNLTDLENLVQRRRKKRQRHK) are a coiled coil. The tract at residues 78–107 (LVQRRRKKRQRHKVPPREPESGAEPQPQVP) is disordered. Over residues 80–91 (QRRRKKRQRHKV) the composition is skewed to basic residues. ANK repeat units lie at residues 144–173 (LHRT…AIEV), 177–206 (LDRT…QVNA), 210–239 (IWST…HINA), and 243–272 (EGDT…KLGV). The interaction with TTN stretch occupies residues 179–196 (RTPVFWACRGGHLDILKR).

As to quaternary structure, interacts with titin/TTN and MYPN.

It localises to the nucleus. Functionally, may be involved in the energy metabolism. Could be a molecular link between myofibrillar stretch-induced signaling pathways and muscle gene expression. This is Ankyrin repeat domain-containing protein 23 (Ankrd23) from Mus musculus (Mouse).